A 318-amino-acid polypeptide reads, in one-letter code: Homoserine kinase (318 aa).

Pro-97–Cys-107 is an ATP binding site.

Belongs to the GHMP kinase family. Homoserine kinase subfamily.

Its subcellular location is the cytoplasm. The enzyme catalyses L-homoserine + ATP = O-phospho-L-homoserine + ADP + H(+). Its pathway is amino-acid biosynthesis; L-threonine biosynthesis; L-threonine from L-aspartate: step 4/5. Its function is as follows. Catalyzes the ATP-dependent phosphorylation of L-homoserine to L-homoserine phosphate. The sequence is that of Homoserine kinase from Aliivibrio salmonicida (strain LFI1238) (Vibrio salmonicida (strain LFI1238)).